Reading from the N-terminus, the 227-residue chain is Phosphoglycolate phosphatase (227 aa).

The Nucleophile role is filled by aspartate 13. The Mg(2+) site is built by aspartate 13, aspartate 15, and aspartate 176.

It belongs to the HAD-like hydrolase superfamily. CbbY/CbbZ/Gph/YieH family. The cofactor is Mg(2+).

It carries out the reaction 2-phosphoglycolate + H2O = glycolate + phosphate. It functions in the pathway organic acid metabolism; glycolate biosynthesis; glycolate from 2-phosphoglycolate: step 1/1. Its function is as follows. Specifically catalyzes the dephosphorylation of 2-phosphoglycolate. Is involved in the dissimilation of the intracellular 2-phosphoglycolate formed during the DNA repair of 3'-phosphoglycolate ends, a major class of DNA lesions induced by oxidative stress. This chain is Phosphoglycolate phosphatase, found in Nitrosospira multiformis (strain ATCC 25196 / NCIMB 11849 / C 71).